The sequence spans 222 residues: Large ribosomal subunit protein bL25 (222 aa).

This sequence belongs to the bacterial ribosomal protein bL25 family. CTC subfamily. In terms of assembly, part of the 50S ribosomal subunit; part of the 5S rRNA/L5/L18/L25 subcomplex. Contacts the 5S rRNA. Binds to the 5S rRNA independently of L5 and L18.

Functionally, this is one of the proteins that binds to the 5S RNA in the ribosome where it forms part of the central protuberance. The sequence is that of Large ribosomal subunit protein bL25 from Ruthia magnifica subsp. Calyptogena magnifica.